The sequence spans 89 residues: Defensin-like protein 108 (89 aa).

The first 20 residues, 1–20 (MTSLIAFLFTVLVIVSSVHC), serve as a signal peptide directing secretion. 4 cysteine pairs are disulfide-bonded: C39–C81, C49–C71, C57–C79, and C61–C80.

The protein belongs to the DEFL family.

The protein resides in the secreted. The sequence is that of Defensin-like protein 108 (LCR51) from Arabidopsis thaliana (Mouse-ear cress).